Here is a 451-residue protein sequence, read N- to C-terminus: Adenylyltransferase and sulfurtransferase MOCS3-1 (451 aa).

The segment at 42-62 is disordered; that stretch reads GEDSDEAEESSNDMPTPQTKL. Positions 43 to 52 are enriched in acidic residues; sequence EDSDEAEESS. Phosphothreonine is present on threonine 60. ATP contacts are provided by residues glycine 99, aspartate 120, 127–131, lysine 144, and 188–189; these read SNLHR and DN. The Zn(2+) site is built by cysteine 229 and cysteine 232. Cysteine 246 functions as the Glycyl thioester intermediate; for adenylyltransferase activity in the catalytic mechanism. Cysteine 304 and cysteine 307 together coordinate Zn(2+). The Rhodanese domain maps to 353-449; it reads QSQPHLLLDV…WTGSVDATFP (97 aa). Cysteine 408 functions as the Cysteine persulfide intermediate; for sulfurtransferase activity in the catalytic mechanism.

This sequence in the N-terminal section; belongs to the HesA/MoeB/ThiF family. UBA4 subfamily. The cofactor is Zn(2+).

It localises to the cytoplasm. It carries out the reaction [molybdopterin-synthase sulfur-carrier protein]-C-terminal Gly-Gly + ATP + H(+) = [molybdopterin-synthase sulfur-carrier protein]-C-terminal Gly-Gly-AMP + diphosphate. It catalyses the reaction [molybdopterin-synthase sulfur-carrier protein]-C-terminal Gly-Gly-AMP + S-sulfanyl-L-cysteinyl-[cysteine desulfurase] + AH2 = [molybdopterin-synthase sulfur-carrier protein]-C-terminal-Gly-aminoethanethioate + L-cysteinyl-[cysteine desulfurase] + A + AMP + 2 H(+). The protein operates within tRNA modification; 5-methoxycarbonylmethyl-2-thiouridine-tRNA biosynthesis. It functions in the pathway cofactor biosynthesis; molybdopterin biosynthesis. Its function is as follows. Plays a central role in 2-thiolation of mcm(5)S(2)U at tRNA wobble positions of cytosolic tRNA(Lys), tRNA(Glu) and tRNA(Gln). Also essential during biosynthesis of the molybdenum cofactor. Acts by mediating the C-terminal thiocarboxylation of sulfur carriers URM1 and MOCS2A. Its N-terminus first activates URM1 and MOCS2A as acyl-adenylates (-COAMP), then the persulfide sulfur on the catalytic cysteine is transferred to URM1 and MOCS2A to form thiocarboxylation (-COSH) of their C-terminus. The reaction probably involves hydrogen sulfide that is generated from the persulfide intermediate and that acts as a nucleophile towards URM1 and MOCS2A. Subsequently, a transient disulfide bond is formed. Does not use thiosulfate as sulfur donor; NFS1 probably acting as a sulfur donor for thiocarboxylation reactions. The protein is Adenylyltransferase and sulfurtransferase MOCS3-1 of Drosophila pseudoobscura pseudoobscura (Fruit fly).